The following is a 364-amino-acid chain: ATP synthase gamma chain, chloroplastic (364 aa).

A chloroplast-targeting transit peptide spans 1–41 (MACSLSFSSSVSTFHLPTTTQSTQAPPNNATTLPTTNPIQC). The disordered stretch occupies residues 17–36 (PTTTQSTQAPPNNATTLPTT). Over residues 25 to 36 (APPNNATTLPTT) the composition is skewed to low complexity. The active site involves cysteine 130. Cysteine 240 and cysteine 246 are joined by a disulfide.

It belongs to the ATPase gamma chain family. In terms of assembly, F-type ATPases have 2 components, CF(1) - the catalytic core - and CF(0) - the membrane proton channel. CF(1) has five subunits: alpha(3), beta(3), gamma(1), delta(1), epsilon(1). CF(0) has four main subunits: a, b, b' and c. In terms of processing, disulfide bond; Cys-240 and Cys-246 are known to form a disulfide bridge in the dark which gives rise to an inactive enzyme. Activation can be brought about by a ferredoxin-dependent reduction of the disulfide bond in the light.

The protein resides in the plastid. It is found in the chloroplast thylakoid membrane. In terms of biological role, produces ATP from ADP in the presence of a proton gradient across the membrane. The gamma chain is believed to be important in regulating ATPase activity and the flow of protons through the CF(0) complex. The sequence is that of ATP synthase gamma chain, chloroplastic (ATPC) from Spinacia oleracea (Spinach).